The primary structure comprises 310 residues: Putative S-adenosyl-L-methionine-dependent methyltransferase MUL_2766 (310 aa).

S-adenosyl-L-methionine contacts are provided by residues Asp131 and 160–161 (DL).

Belongs to the UPF0677 family.

Functionally, exhibits S-adenosyl-L-methionine-dependent methyltransferase activity. In Mycobacterium ulcerans (strain Agy99), this protein is Putative S-adenosyl-L-methionine-dependent methyltransferase MUL_2766.